The sequence spans 458 residues: Ammonium transporter Rh type B (458 aa).

The Cytoplasmic segment spans residues 1–13 (MAGSPSRAAGRRL). A helical transmembrane segment spans residues 14–34 (QLPLLCLFLQGATAVLFAVFV). Residues 35–61 (RYNHKTDAALWHRSNHSNADNEFYFRY) are Extracellular-facing. Residue Asn49 is glycosylated (N-linked (GlcNAc...) asparagine). A helical transmembrane segment spans residues 62 to 82 (PSFQDVHAMVFVGFGFLMVFL). At 83–86 (QRYG) the chain is on the cytoplasmic side. Residues 87 to 107 (FSSVGFTFLLAAFALQWSTLV) form a helical membrane-spanning segment. At 108 to 124 (QGFLHSFHGGHIHVGVE) the chain is on the extracellular side. Residues 125–145 (SMINADFCAGAVLISFGAVLG) traverse the membrane as a helical segment. The Cytoplasmic portion of the chain corresponds to 146–149 (KTGP). A helical transmembrane segment spans residues 150–170 (TQLLLMALLEVVLFGINEFVL). At 171–178 (LHLLGVRD) the chain is on the extracellular side. Residues 179–201 (AGGSMTIHTFGAYFGLVLSRVLY) form a helical membrane-spanning segment. The Cytoplasmic portion of the chain corresponds to 202 to 219 (RPQLEKSKHRQGSVYHSD). The helical transmembrane segment at 220-240 (LFAMIGTIFLWIFWPSFNAAL) threads the bilayer. The Extracellular portion of the chain corresponds to 241–251 (TALGAGQHRTA). Residues 252-272 (LNTYYSLAASTLGTFALSALV) traverse the membrane as a helical segment. Topologically, residues 273–282 (GEDGRLDMVH) are cytoplasmic. A helical membrane pass occupies residues 283–303 (IQNAALAGGVVVGTSSEMMLT). Pro304 is a topological domain (extracellular). The helical transmembrane segment at 305–325 (FGALAAGFLAGTVSTLGYKFF) threads the bilayer. Over 326–346 (TPILESKFKVQDTCGVHNLHG) the chain is Cytoplasmic. A helical transmembrane segment spans residues 347 to 367 (MPGVLGALLGVLVAGLATHEA). The Extracellular portion of the chain corresponds to 368–393 (YGDGLESVFPLIAEGQRSATSQAMHQ). A helical transmembrane segment spans residues 394–414 (LFGLFVTLMFASVGGGLGGLL). Over 415-458 (LKLPFLDSPPDSQHYEDQVHWQVPGEHEDKAQRPLRVEEADTQA) the chain is Cytoplasmic. The interaction with ANK3 stretch occupies residues 416-424 (KLPFLDSPP). The segment at 436-458 (QVPGEHEDKAQRPLRVEEADTQA) is disordered.

This sequence belongs to the ammonium transporter (TC 2.A.49) family. Rh subfamily. Interacts (via C-terminus) with ANK2 and ANK3; required for targeting to the basolateral membrane. Post-translationally, N-glycosylated. In terms of tissue distribution, specifically expressed in kidney. Also detected in liver and ovary.

The protein localises to the cell membrane. It localises to the basolateral cell membrane. It carries out the reaction NH4(+)(in) = NH4(+)(out). The catalysed reaction is methylamine(out) = methylamine(in). It catalyses the reaction CO2(out) = CO2(in). Its function is as follows. Ammonium transporter involved in the maintenance of acid-base homeostasis. Transports ammonium and its related derivative methylammonium across the basolateral plasma membrane of epithelial cells likely contributing to renal transepithelial ammonia transport and ammonia metabolism. May transport either NH4(+) or NH3 ammonia species predominantly mediating an electrogenic NH4(+) transport. May act as a CO2 channel providing for renal acid secretion. The protein is Ammonium transporter Rh type B of Homo sapiens (Human).